The chain runs to 141 residues: Hemoglobin subunit alpha (141 aa).

A Globin domain is found at 1-141 (VLSADDKANV…VSTVLTSKYR (141 aa)). Ser-3 carries the phosphoserine modification. N6-succinyllysine occurs at positions 7 and 11. Residue Lys-16 is modified to N6-acetyllysine; alternate. At Lys-16 the chain carries N6-succinyllysine; alternate. The residue at position 24 (Tyr-24) is a Phosphotyrosine. Ser-35 carries the phosphoserine modification. Lys-40 carries the N6-succinyllysine modification. At Ser-49 the chain carries Phosphoserine. His-58 is a binding site for O2. A heme b-binding site is contributed by His-87. Ser-102 is modified (phosphoserine). Phosphothreonine is present on Thr-108. Phosphoserine occurs at positions 124 and 131. 2 positions are modified to phosphothreonine: Thr-134 and Thr-137. Ser-138 is subject to Phosphoserine.

The protein belongs to the globin family. Heterotetramer of two alpha chains and two beta chains. As to expression, red blood cells.

In terms of biological role, involved in oxygen transport from the lung to the various peripheral tissues. The sequence is that of Hemoglobin subunit alpha from Peromyscus californicus (California mouse).